Consider the following 68-residue polypeptide: Non-disulfide-bridged peptide 5.6 (68 aa).

An N-terminal signal peptide occupies residues 1–23 (MKTQVIIFIMAVVFLQLLSQSEA). A propeptide spanning residues 37–68 (ELRNIDLDQFDDMFDEPEISAADMRFLQELLK) is cleaved from the precursor.

It belongs to the non-disulfide-bridged peptide (NDBP) superfamily. Short antimicrobial peptide (group 4) family. In terms of tissue distribution, expressed by the venom gland.

Its subcellular location is the secreted. It is found in the target cell membrane. In terms of biological role, antibacterial peptide with activity against both Gram-positive and Gram-negative bacteria probably by forming pores in the cell membrane. Also has weak hemolytic activity. Does not show antifungal activity. This is Non-disulfide-bridged peptide 5.6 from Hoffmannihadrurus gertschi (Scorpion).